A 331-amino-acid chain; its full sequence is UPF0324 membrane protein SAS0317 (331 aa).

Helical transmembrane passes span 9 to 26, 31 to 48, 69 to 88, 93 to 115, 122 to 144, 154 to 176, 183 to 202, 217 to 234, 247 to 269, 273 to 295, and 308 to 330; these read FMIG…SFLA, ILDK…AILY, LLRF…DIIG, LLAI…NKLL, ALLL…APIF, SIGI…YAIF, YGAW…LAGG, LGRV…ILIM, ISIP…VTIP, LNIL…GLNV, and LMTI…HWLY.

This sequence belongs to the UPF0324 family.

The protein resides in the cell membrane. This Staphylococcus aureus (strain MSSA476) protein is UPF0324 membrane protein SAS0317.